The following is a 278-amino-acid chain: Ras-related protein Rab-40A-like (278 aa).

GTP is bound by residues G26, K27, and S28. S28 contributes to the Mg(2+) binding site. Residues 41–49 (SPYSHLGGI) form a switch-I region. Residue D69 coordinates Mg(2+). Residues G72, N126, and R127 each coordinate GTP. A switch-II region spans residues 72-88 (GQGRFCTIFRSYSRGAQ). The 54-residue stretch at 175–228 (LLRHRLNWLGRPSKVLSLQDLCCRTIVSCTPVHLVDKLPLPIALRSHLKSFSMA) folds into the SOCS box domain. C270 carries the S-palmitoyl cysteine lipid modification. C275 carries S-geranylgeranyl cysteine lipidation.

This sequence belongs to the small GTPase superfamily. Rab family. Mg(2+) serves as cofactor. As to expression, expressed in brain, lung, heart, skeletal muscle, kidney and liver. Highest expression in brain. Expressed in fetal brain and kidney.

It localises to the membrane. It is found in the cytoplasm. Its subcellular location is the mitochondrion. The enzyme catalyses GTP + H2O = GDP + phosphate + H(+). It participates in protein modification; protein ubiquitination. With respect to regulation, regulated by guanine nucleotide exchange factors (GEFs) which promote the exchange of bound GDP for free GTP. Regulated by GTPase activating proteins (GAPs) which increase the GTP hydrolysis activity. Inhibited by GDP dissociation inhibitors (GDIs). May act as substrate-recognition component of the ECS(RAB40) E3 ubiquitin ligase complex which mediates the ubiquitination and subsequent proteasomal degradation of target proteins. The Rab40 subfamily belongs to the Rab family that are key regulators of intracellular membrane trafficking, from the formation of transport vesicles to their fusion with membranes. Rabs cycle between an inactive GDP-bound form and an active GTP-bound form that is able to recruit to membranes different sets of downstream effectors directly responsible for vesicle formation, movement, tethering and fusion. The polypeptide is Ras-related protein Rab-40A-like (Homo sapiens (Human)).